Here is a 280-residue protein sequence, read N- to C-terminus: Pantothenate synthetase (280 aa).

26–33 (MGNLHEGH) is a binding site for ATP. The Proton donor role is filled by His-33. Position 57 (Gln-57) interacts with (R)-pantoate. Gln-57 is a binding site for beta-alanine. 145–148 (GKKD) is a binding site for ATP. Gln-151 serves as a coordination point for (R)-pantoate. ATP is bound by residues Val-174 and 182-185 (LSSR).

Belongs to the pantothenate synthetase family. In terms of assembly, homodimer.

It localises to the cytoplasm. The catalysed reaction is (R)-pantoate + beta-alanine + ATP = (R)-pantothenate + AMP + diphosphate + H(+). It participates in cofactor biosynthesis; (R)-pantothenate biosynthesis; (R)-pantothenate from (R)-pantoate and beta-alanine: step 1/1. Functionally, catalyzes the condensation of pantoate with beta-alanine in an ATP-dependent reaction via a pantoyl-adenylate intermediate. This chain is Pantothenate synthetase, found in Bordetella avium (strain 197N).